The sequence spans 80 residues: Exodeoxyribonuclease 7 small subunit (80 aa).

This sequence belongs to the XseB family. Heterooligomer composed of large and small subunits.

It is found in the cytoplasm. It carries out the reaction Exonucleolytic cleavage in either 5'- to 3'- or 3'- to 5'-direction to yield nucleoside 5'-phosphates.. In terms of biological role, bidirectionally degrades single-stranded DNA into large acid-insoluble oligonucleotides, which are then degraded further into small acid-soluble oligonucleotides. The polypeptide is Exodeoxyribonuclease 7 small subunit (Vibrio campbellii (strain ATCC BAA-1116)).